Here is a 73-residue protein sequence, read N- to C-terminus: Exodeoxyribonuclease 7 small subunit (73 aa).

Belongs to the XseB family. Heterooligomer composed of large and small subunits.

It is found in the cytoplasm. It catalyses the reaction Exonucleolytic cleavage in either 5'- to 3'- or 3'- to 5'-direction to yield nucleoside 5'-phosphates.. Bidirectionally degrades single-stranded DNA into large acid-insoluble oligonucleotides, which are then degraded further into small acid-soluble oligonucleotides. This chain is Exodeoxyribonuclease 7 small subunit, found in Clostridium novyi (strain NT).